Reading from the N-terminus, the 659-residue chain is QWRF motif-containing protein 2 (659 aa).

5 disordered regions span residues 1-125 (MVAA…SVTV), 157-221 (SKKK…LDCG), 291-317 (DTDS…ISKS), 340-359 (RLQD…TSSI), and 371-429 (SDAV…NAYN). Positions 42-72 (SPSPSHSVSSTTTTTTTTTTTTSSSSSSSSS) are enriched in low complexity. The segment covering 90–102 (RSTTNSASNSIKT) has biased composition (polar residues). Residues 172–190 (STPERRRSTPVRDQRENSK) are compositionally biased toward basic and acidic residues. 2 stretches are compositionally biased toward polar residues: residues 206–216 (SESVVPNSLSR) and 291–303 (DTDS…TNGV). Low complexity-rich tracts occupy residues 345-359 (GSPL…TSSI) and 401-418 (ATTT…SRAR). Residues 468-471 (QWRF) carry the QWRF motif motif.

Belongs to the QWRF family.

In Arabidopsis thaliana (Mouse-ear cress), this protein is QWRF motif-containing protein 2 (QWRF2).